We begin with the raw amino-acid sequence, 590 residues long: Cyclin-dependent kinase-like 3 (590 aa).

The Protein kinase domain occupies Tyr4–Phe286. ATP is bound by residues Val10–Val18 and Lys33. The short motif at Lys45–Ile51 is the [NKR]KIAxRE element. The active-site Proton acceptor is Asp125. Thr158 carries the post-translational modification Phosphothreonine. Residue Tyr160 is modified to Phosphotyrosine. Disordered stretches follow at residues Arg459–Asn508 and Leu547–Glu590. The span at Ser466 to Ser477 shows a compositional bias: polar residues. 2 stretches are compositionally biased toward basic and acidic residues: residues Leu547–Ser556 and Thr580–Glu590.

The protein belongs to the protein kinase superfamily. CMGC Ser/Thr protein kinase family. CDC2/CDKX subfamily.

It is found in the cytoplasm. The enzyme catalyses L-seryl-[protein] + ATP = O-phospho-L-seryl-[protein] + ADP + H(+). It carries out the reaction L-threonyl-[protein] + ATP = O-phospho-L-threonyl-[protein] + ADP + H(+). The protein is Cyclin-dependent kinase-like 3 of Macaca fascicularis (Crab-eating macaque).